Consider the following 402-residue polypeptide: Proline-rich protein 25 (402 aa).

Disordered stretches follow at residues 1–29, 109–255, and 337–371; these read MARTDQKPPCRGGCWGQPGHPNTGGAAAH, TVPG…MVGS, and EAAQDPATRRTAPPRRTASPEPPAPGAPLPACPGR. A compositionally biased stretch (low complexity) spans 345–355; it reads RRTAPPRRTAS. Residues 356–367 show a composition bias toward pro residues; the sequence is PEPPAPGAPLPA.

In Homo sapiens (Human), this protein is Proline-rich protein 25 (PRR25).